The sequence spans 362 residues: Peptide chain release factor 1 (362 aa).

An N5-methylglutamine modification is found at Q236.

It belongs to the prokaryotic/mitochondrial release factor family. In terms of processing, methylated by PrmC. Methylation increases the termination efficiency of RF1.

The protein resides in the cytoplasm. Peptide chain release factor 1 directs the termination of translation in response to the peptide chain termination codons UAG and UAA. In Lactobacillus johnsonii (strain CNCM I-12250 / La1 / NCC 533), this protein is Peptide chain release factor 1.